Consider the following 663-residue polypeptide: Drug sensory protein A (663 aa).

Helical transmembrane passes span 32 to 52, 165 to 185, and 199 to 219; these read LMAA…FWAV, VFIP…GINP, and VTIA…VFNA. Residues 220–272 enclose the HAMP domain; that stretch reads LTITQPIKELLLGVKNIAAGNFKQRITLPFGGELGELIVNFNEMAERLERYEA. A PAS domain is found at 281 to 351; sequence EKAKLDTLVS…QPLRELAADQ (71 aa). One can recognise a Histidine kinase domain in the interval 429–656; that stretch reads NVSHELRTPL…TFWFDLAVYQ (228 aa). Histidine 432 bears the Phosphohistidine; by autocatalysis mark.

The protein resides in the cell membrane. The catalysed reaction is ATP + protein L-histidine = ADP + protein N-phospho-L-histidine.. The chain is Drug sensory protein A (dspA) from Synechocystis sp. (strain ATCC 27184 / PCC 6803 / Kazusa).